The primary structure comprises 229 residues: 3-dehydroquinate dehydratase (229 aa).

Residues 33–35 and arginine 65 contribute to the 3-dehydroquinate site; that span reads EWR. Histidine 121 (proton donor/acceptor) is an active-site residue. Lysine 146 acts as the Schiff-base intermediate with substrate in catalysis. Residues arginine 188, serine 207, and glutamine 211 each contribute to the 3-dehydroquinate site.

Belongs to the type-I 3-dehydroquinase family. In terms of assembly, homodimer.

It catalyses the reaction 3-dehydroquinate = 3-dehydroshikimate + H2O. It participates in metabolic intermediate biosynthesis; chorismate biosynthesis; chorismate from D-erythrose 4-phosphate and phosphoenolpyruvate: step 3/7. Functionally, involved in the third step of the chorismate pathway, which leads to the biosynthesis of aromatic amino acids. Catalyzes the cis-dehydration of 3-dehydroquinate (DHQ) and introduces the first double bond of the aromatic ring to yield 3-dehydroshikimate. The polypeptide is 3-dehydroquinate dehydratase (Lactococcus lactis subsp. cremoris (strain SK11)).